Consider the following 871-residue polypeptide: CRISPR system Cmr subunit Cmr2 (871 aa).

Residues 1–215 (MVNIKEKLFV…THLDLTSALS (215 aa)) form a not required for target RNA cleavage region. Mn(2+) is bound by residues His-13, Asp-14, and His-25. Positions 448, 451, 478, and 481 each coordinate Zn(2+). The GGDEF domain maps to 592–752 (KYYAILVMDG…GKDTLAIGLL (161 aa)). Residues Asp-600, Glu-656, Asp-673, Asp-674, Glu-694, and Glu-700 each coordinate Mn(2+).

Belongs to the CRISPR system Cmr2 family. As to quaternary structure, part of the type III-B Cmr ribonucleoprotein (RNP) complex, an elongated RNP with Cmr2 and Cmr3 as the base, with Cmr4 and Cmr5 forming a helical core along the mature crRNA (39 or 45 nt in length), while the complex is capped by Cmr6 and Cmr1. The 5' end of the crRNA is bound to Cmr2 and Cmr3, while Cmr6 and a Cmr1 subunit (Cmr1-1 or Cmr1-2) cap the 3' end of the crRNA. The target RNA lies antiparallel to the crRNA, with its 5' end near Cmr1 and Cmr6 and its 3' end near Cmr2 and Cmr3; major target cleavage occurs nears the junction of Cmr1/Cmr6 and Cmr4/Cmr, with minor cleavage occurring at 6 nt intervals which coincide with the proposed spacing of Cmr4 subunits. Forms a 1:1 complex with Cmr3. The Cmr2-Cmr3 complex non-specifically binds ss-target RNA and crRNA. Interacts with Cmr3, Cmr4 and Cmr5. Requires Ca(2+) as cofactor. It depends on Mn(2+) as a cofactor. Zn(2+) serves as cofactor.

It localises to the cytoplasm. Its function is as follows. CRISPR (clustered regularly interspaced short palindromic repeat), is an adaptive immune system that provides protection against mobile genetic elements (viruses, transposable elements and conjugative plasmids). CRISPR clusters contain sequences complementary to antecedent mobile elements and target invading nucleic acids. CRISPR clusters are transcribed and processed into CRISPR RNA (crRNA), formerly called psiRNA (prokaryotic silencing) in this organism. Part of the Cmr ribonucleoprotein complex which has divalent cation-dependent endoribonuclease activity specific for ssRNA complementary to the crRNA (target RNA), generating 5' hydroxy- and 3' phosphate or 2'-3' cyclic phosphate termini. Cmr4 is probably the subunit that cleaves target RNA. Cmr complex does not cleave ssDNA complementary to the crRNA. Cleavage of target RNA is guided by the crRNA; substrate cleavage occurs a fixed distance (14 nt) from the 3' end of the crRNA. In vitro reconstitution shows Cmr1-2 and Cmr5 are not absolutely necessary for target cleavage. The sequence is that of CRISPR system Cmr subunit Cmr2 from Pyrococcus furiosus (strain ATCC 43587 / DSM 3638 / JCM 8422 / Vc1).